Reading from the N-terminus, the 66-residue chain is Large ribosomal subunit protein bL31 (66 aa).

Zn(2+)-binding residues include Cys16, Cys18, Cys36, and Cys39.

Belongs to the bacterial ribosomal protein bL31 family. Type A subfamily. As to quaternary structure, part of the 50S ribosomal subunit. It depends on Zn(2+) as a cofactor.

Binds the 23S rRNA. The protein is Large ribosomal subunit protein bL31 of Geobacter metallireducens (strain ATCC 53774 / DSM 7210 / GS-15).